A 122-amino-acid chain; its full sequence is MSPTSFFLLTLLLVLVTEARGARERFSQSAEDPSSSHMGIKIRAGGSGSGSAMEEYSVSENSWSNFKSKHPSSISSESFHEESSSSSEMSSSGGHFGLKMRGSQAGGGMSSFKTRVKSRILK.

The signal sequence occupies residues methionine 1–glycine 21. The segment at arginine 23 to lysine 122 is disordered. Polar residues predominate over residues serine 27–histidine 37.

This sequence belongs to the SVP2/SVP5/SVP6 family. Testis.

Its subcellular location is the secreted. It localises to the extracellular space. This is Seminal vesicle secretory protein 5 (Svs5) from Mus musculus (Mouse).